Consider the following 212-residue polypeptide: Adenylate kinase (212 aa).

Residue Gly10–Thr15 participates in ATP binding. The tract at residues Ala30–Ile59 is NMP. Residues Arg36, Glu57–Ile59, Gly85–Arg88, and Gln92 each bind AMP. The LID stretch occupies residues Gly122–Asp160. Arg123 contributes to the ATP binding site. Residues Cys126 and Cys129 each contribute to the Zn(2+) site. Ile132–Tyr133 is a binding site for ATP. Zn(2+)-binding residues include Cys146 and Cys149. Arg157 and Arg168 together coordinate AMP. ATP is bound at residue Lys196.

Belongs to the adenylate kinase family. As to quaternary structure, monomer.

The protein localises to the cytoplasm. The catalysed reaction is AMP + ATP = 2 ADP. Its pathway is purine metabolism; AMP biosynthesis via salvage pathway; AMP from ADP: step 1/1. In terms of biological role, catalyzes the reversible transfer of the terminal phosphate group between ATP and AMP. Plays an important role in cellular energy homeostasis and in adenine nucleotide metabolism. This chain is Adenylate kinase, found in Rickettsia rickettsii (strain Iowa).